A 489-amino-acid chain; its full sequence is Glycogen synthase (489 aa).

Arg-20 serves as a coordination point for ADP-alpha-D-glucose.

Belongs to the glycosyltransferase 1 family. Bacterial/plant glycogen synthase subfamily.

The enzyme catalyses [(1-&gt;4)-alpha-D-glucosyl](n) + ADP-alpha-D-glucose = [(1-&gt;4)-alpha-D-glucosyl](n+1) + ADP + H(+). Its pathway is glycan biosynthesis; glycogen biosynthesis. Synthesizes alpha-1,4-glucan chains using ADP-glucose. The sequence is that of Glycogen synthase from Chlorobium limicola (strain DSM 245 / NBRC 103803 / 6330).